The following is a 309-amino-acid chain: Foldase protein PrsA (309 aa).

The signal sequence occupies residues 1–20 (MKKKIVAGAVTLLSVAVLAA). Cys-21 carries the N-palmitoyl cysteine lipid modification. A lipid anchor (S-diacylglycerol cysteine) is attached at Cys-21. Residues 144–241 (TPEVTAQIIK…ASYYIVKLVS (98 aa)) form the PpiC domain.

It belongs to the PrsA family.

The protein localises to the cell membrane. It catalyses the reaction [protein]-peptidylproline (omega=180) = [protein]-peptidylproline (omega=0). Its function is as follows. Plays a major role in protein secretion by helping the post-translocational extracellular folding of several secreted proteins. This chain is Foldase protein PrsA, found in Streptococcus gordonii (strain Challis / ATCC 35105 / BCRC 15272 / CH1 / DL1 / V288).